A 376-amino-acid polypeptide reads, in one-letter code: Dihydroorotate dehydrogenase (quinone) (376 aa).

Residues 74–78 (AGFDK) and threonine 98 contribute to the FMN site. Lysine 78 is a binding site for substrate. Position 123 to 127 (123 to 127 (NRMGF)) interacts with substrate. FMN is bound by residues asparagine 155 and asparagine 188. Asparagine 188 is a substrate binding site. Residue serine 191 is the Nucleophile of the active site. Asparagine 193 is a binding site for substrate. Lysine 226 and threonine 254 together coordinate FMN. 255-256 (NT) contributes to the substrate binding site. FMN-binding positions include glycine 284, glycine 313, and 334–335 (YT).

Belongs to the dihydroorotate dehydrogenase family. Type 2 subfamily. In terms of assembly, monomer. It depends on FMN as a cofactor.

It is found in the cell membrane. It catalyses the reaction (S)-dihydroorotate + a quinone = orotate + a quinol. It participates in pyrimidine metabolism; UMP biosynthesis via de novo pathway; orotate from (S)-dihydroorotate (quinone route): step 1/1. Catalyzes the conversion of dihydroorotate to orotate with quinone as electron acceptor. This chain is Dihydroorotate dehydrogenase (quinone), found in Nostoc punctiforme (strain ATCC 29133 / PCC 73102).